The primary structure comprises 189 residues: Auxin-responsive protein IAA3 (189 aa).

Positions 12–16 (LRLGL) match the EAR-like (transcriptional repression) motif. A disordered region spans residues 42–65 (TDTEKEIESSSRKTETSPPRKAQI). Residues 43–56 (DTEKEIESSSRKTE) are compositionally biased toward basic and acidic residues. The PB1 domain maps to 92 to 179 (GIYVKVSMDG…TCKRLRIMKG (88 aa)).

Belongs to the Aux/IAA family. In terms of assembly, homodimers and heterodimers. Interacts with TPL. Interacts with TIR1, the F-box component of the Skp1-Cdc53/cullin-F-box (SCFTIR1) E3 ubiquitin ligase complex. Phosphorylated by phytochrome A in vitro. Highly expressed in stems and flowers. Expressed in hypocotyls, cotyledons and leaves, but barely detected in roots. Expressed in root tips. In the root meristem, specifically detected at the vascular tissue transition zone.

The protein resides in the nucleus. Functionally, aux/IAA proteins are short-lived transcriptional factors that function as repressors of early auxin response genes at low auxin concentrations. Repression is thought to result from the interaction with auxin response factors (ARFs), proteins that bind to the auxin-responsive promoter element (AuxRE). Plays a central role in auxin regulation of root growth, in gravitropism, and in lateral root formation. Regulated by an auxin-induced protein turnover. Formation of heterodimers with ARF proteins may alter their ability to modulate early auxin response genes expression. When activated by cytokinin, restricts the expression of the PIN genes to the vascular transition zone. Induction of SHY2 in the vascular transition zone restricts BRX expression to down-regulate PIN3 and thus limit meristem growth, but proper SHY2 expression requires BRX. Involved in meristem growth and in determining its size. May participate in strigolactone signaling to regulate meristem size and lateral root formation. This is Auxin-responsive protein IAA3 (IAA3) from Arabidopsis thaliana (Mouse-ear cress).